Reading from the N-terminus, the 879-residue chain is DNA mismatch repair protein MutS (879 aa).

Position 629–636 (629–636 (GPNMAGKS)) interacts with ATP. The interval 824-845 (VGGQPQKELSEHKPHQPSLFAP) is disordered.

It belongs to the DNA mismatch repair MutS family.

This protein is involved in the repair of mismatches in DNA. It is possible that it carries out the mismatch recognition step. This protein has a weak ATPase activity. This Desulfotalea psychrophila (strain LSv54 / DSM 12343) protein is DNA mismatch repair protein MutS.